The following is a 150-amino-acid chain: Ribonuclease H (150 aa).

In terms of domain architecture, RNase H type-1 spans 1 to 141 (MRPVIIHTDG…ADQLARDGLT (141 aa)). Asp-9, Glu-47, Asp-69, and Asp-133 together coordinate Mg(2+).

It belongs to the RNase H family. As to quaternary structure, monomer. It depends on Mg(2+) as a cofactor.

Its subcellular location is the cytoplasm. It catalyses the reaction Endonucleolytic cleavage to 5'-phosphomonoester.. Endonuclease that specifically degrades the RNA of RNA-DNA hybrids. This Rhodopseudomonas palustris (strain BisB5) protein is Ribonuclease H.